The following is a 507-amino-acid chain: Maturase K (507 aa).

It belongs to the intron maturase 2 family. MatK subfamily.

It localises to the plastid. The protein localises to the chloroplast. In terms of biological role, usually encoded in the trnK tRNA gene intron. Probably assists in splicing its own and other chloroplast group II introns. This Euryale ferox (Gorgon plant) protein is Maturase K.